The following is a 351-amino-acid chain: Dihydroorotate dehydrogenase (quinone) (351 aa).

FMN-binding positions include 65–69 (AGLDK) and Thr-89. Lys-69 lines the substrate pocket. 114 to 118 (NRLGF) is a binding site for substrate. Asn-150 and Asn-183 together coordinate FMN. Asn-183 serves as a coordination point for substrate. The Nucleophile role is filled by Ser-186. Asn-188 contacts substrate. FMN contacts are provided by Lys-228 and Thr-256. Residue 257-258 (NT) coordinates substrate. Residues Gly-279, Gly-308, and 329–330 (YT) contribute to the FMN site.

This sequence belongs to the dihydroorotate dehydrogenase family. Type 2 subfamily. Monomer. The cofactor is FMN.

It is found in the cell membrane. It carries out the reaction (S)-dihydroorotate + a quinone = orotate + a quinol. Its pathway is pyrimidine metabolism; UMP biosynthesis via de novo pathway; orotate from (S)-dihydroorotate (quinone route): step 1/1. Catalyzes the conversion of dihydroorotate to orotate with quinone as electron acceptor. This chain is Dihydroorotate dehydrogenase (quinone), found in Acidovorax sp. (strain JS42).